A 209-amino-acid polypeptide reads, in one-letter code: Imidazole glycerol phosphate synthase subunit HisH (209 aa).

Positions 3 to 209 (KIAIIDYGMG…SILKNFGEMK (207 aa)) constitute a Glutamine amidotransferase type-1 domain. C81 acts as the Nucleophile in catalysis. Residues H190 and E192 contribute to the active site.

Heterodimer of HisH and HisF.

It is found in the cytoplasm. The enzyme catalyses 5-[(5-phospho-1-deoxy-D-ribulos-1-ylimino)methylamino]-1-(5-phospho-beta-D-ribosyl)imidazole-4-carboxamide + L-glutamine = D-erythro-1-(imidazol-4-yl)glycerol 3-phosphate + 5-amino-1-(5-phospho-beta-D-ribosyl)imidazole-4-carboxamide + L-glutamate + H(+). The catalysed reaction is L-glutamine + H2O = L-glutamate + NH4(+). It participates in amino-acid biosynthesis; L-histidine biosynthesis; L-histidine from 5-phospho-alpha-D-ribose 1-diphosphate: step 5/9. Its function is as follows. IGPS catalyzes the conversion of PRFAR and glutamine to IGP, AICAR and glutamate. The HisH subunit catalyzes the hydrolysis of glutamine to glutamate and ammonia as part of the synthesis of IGP and AICAR. The resulting ammonia molecule is channeled to the active site of HisF. This is Imidazole glycerol phosphate synthase subunit HisH from Geobacter sulfurreducens (strain ATCC 51573 / DSM 12127 / PCA).